Consider the following 444-residue polypeptide: Glycerol-3-phosphate transporter (444 aa).

Topologically, residues 1–36 (MLNIFKPAPHIERLDDSKMDAAYKRLRLQVFIGIFI) are cytoplasmic. The chain crosses the membrane as a helical span at residues 37 to 57 (GYAGYYLLRKNFAFAIPYLQE). Topologically, residues 58-63 (QGFSKT) are extracellular. Residues 64–84 (ELGLVLAAVSIAYGFSKFIMG) form a helical membrane-spanning segment. The Cytoplasmic segment spans residues 85 to 93 (MVSDRCNPR). Residues 94–112 (YFLATGLFLSAIVNILFVS) form a helical membrane-spanning segment. The Extracellular segment spans residues 113 to 120 (MPWVTSSV). The helical transmembrane segment at 121–141 (TIMFIFMFINGWFQGMGWPPC) threads the bilayer. Residues 142–160 (GRTMAHWFSISERGTKMSI) are Cytoplasmic-facing. Residues 161 to 180 (WNVAHNIGGGILAPLVTLGI) traverse the membrane as a helical segment. Over 181–189 (AMFVTWKSV) the chain is Extracellular. A helical transmembrane segment spans residues 190-207 (FFFPAIIAIIISFLIVLL). Residues 208–261 (VRDTPQSCGLPPIEEYRNDYPKHAFKNQEKELTTKEILFQYVLNNKFLWYIAFA) are Cytoplasmic-facing. The chain crosses the membrane as a helical span at residues 262–282 (NVFVYFVRYGVVDWAPTYLTE). Over 283–287 (AKGFS) the chain is Extracellular. A helical membrane pass occupies residues 288–308 (PEDSRWSYFLYEYAGIPGTIL). The Cytoplasmic portion of the chain corresponds to 309–321 (CGWISDRFFKSRR). Residues 322–341 (APAGVLFMAGVFIAVLVYWL) traverse the membrane as a helical segment. Over 342-346 (NPAGN) the chain is Extracellular. A helical transmembrane segment spans residues 347–368 (PLVDNIALISIGFLIYGPVMLI). The Cytoplasmic segment spans residues 369–387 (GLQAIDLAPKKAAGTAAGL). A helical transmembrane segment spans residues 388–409 (TGFFGYIGGSAFANAIMGFVVD). Topologically, residues 410–414 (RFNWN) are extracellular. Residues 415–435 (GGFIMLISSCILAIVFLALTW) traverse the membrane as a helical segment. At 436 to 444 (NTGKRAEHV) the chain is on the cytoplasmic side.

The protein belongs to the major facilitator superfamily. Organophosphate:Pi antiporter (OPA) (TC 2.A.1.4) family.

The protein resides in the cell membrane. Its function is as follows. Responsible for glycerol-3-phosphate uptake. The sequence is that of Glycerol-3-phosphate transporter (glpT) from Bacillus subtilis (strain 168).